The following is a 293-amino-acid chain: Diaminopimelate epimerase (293 aa).

Substrate is bound by residues Asn17, Gln47, and Asn67. Cys76 (proton donor) is an active-site residue. Substrate-binding positions include 77–78 (GN), Asn164, Asn197, and 215–216 (ER). Residue Cys224 is the Proton acceptor of the active site. Substrate is bound at residue 225-226 (GS).

It belongs to the diaminopimelate epimerase family. As to quaternary structure, homodimer.

Its subcellular location is the cytoplasm. The enzyme catalyses (2S,6S)-2,6-diaminopimelate = meso-2,6-diaminopimelate. It functions in the pathway amino-acid biosynthesis; L-lysine biosynthesis via DAP pathway; DL-2,6-diaminopimelate from LL-2,6-diaminopimelate: step 1/1. Catalyzes the stereoinversion of LL-2,6-diaminopimelate (L,L-DAP) to meso-diaminopimelate (meso-DAP), a precursor of L-lysine and an essential component of the bacterial peptidoglycan. This chain is Diaminopimelate epimerase, found in Rhodopseudomonas palustris (strain ATCC BAA-98 / CGA009).